Reading from the N-terminus, the 597-residue chain is Probable translation initiation factor IF-2 (597 aa).

The 218-residue stretch at 8–225 (LRQPIVVVLG…LLAGLTQQYL (218 aa)) folds into the tr-type G domain. Positions 17-24 (GHVDHGKT) are G1. Residue 17–24 (GHVDHGKT) participates in GTP binding. Positions 42-46 (EMTQE) are G2. A G3 region spans residues 81–84 (DTPG). Residues 81–85 (DTPGH) and 135–138 (NKID) contribute to the GTP site. The segment at 135–138 (NKID) is G4. A G5 region spans residues 203–205 (SGK).

Belongs to the TRAFAC class translation factor GTPase superfamily. Classic translation factor GTPase family. IF-2 subfamily.

In terms of biological role, function in general translation initiation by promoting the binding of the formylmethionine-tRNA to ribosomes. Seems to function along with eIF-2. This Metallosphaera sedula (strain ATCC 51363 / DSM 5348 / JCM 9185 / NBRC 15509 / TH2) protein is Probable translation initiation factor IF-2.